A 347-amino-acid chain; its full sequence is Protein RecA (347 aa).

67–74 (GPESSGKT) is a binding site for ATP.

The protein belongs to the RecA family.

The protein localises to the cytoplasm. Functionally, can catalyze the hydrolysis of ATP in the presence of single-stranded DNA, the ATP-dependent uptake of single-stranded DNA by duplex DNA, and the ATP-dependent hybridization of homologous single-stranded DNAs. It interacts with LexA causing its activation and leading to its autocatalytic cleavage. This is Protein RecA from Helicobacter pylori (strain G27).